The following is a 273-amino-acid chain: Rhamnulose-1-phosphate aldolase (273 aa).

Residue E117 is part of the active site. 3 residues coordinate Zn(2+): H140, H142, and H211.

This sequence belongs to the aldolase class II family. RhaD subfamily. Requires Zn(2+) as cofactor.

It localises to the cytoplasm. It catalyses the reaction L-rhamnulose 1-phosphate = (S)-lactaldehyde + dihydroxyacetone phosphate. The protein operates within carbohydrate degradation; L-rhamnose degradation; glycerone phosphate from L-rhamnose: step 3/3. Its function is as follows. Catalyzes the reversible cleavage of L-rhamnulose-1-phosphate to dihydroxyacetone phosphate (DHAP) and L-lactaldehyde. The chain is Rhamnulose-1-phosphate aldolase from Listeria monocytogenes serotype 4b (strain F2365).